The following is a 1104-amino-acid chain: Transient receptor potential cation channel subfamily M member 8 (1104 aa).

Over 1 to 733 (MSFEGARLSM…LWYYVAFFTS (733 aa)) the chain is Cytoplasmic. A helical membrane pass occupies residues 734–758 (PFVVFSWNVVFYIAFLLLFAYVLLM). Residues 759 to 765 (DFHSVPH) lie on the Extracellular side of the membrane. Residues 766 to 789 (TPELILYALVFVLFCDEVRQWYMN) form a helical membrane-spanning segment. Ca(2+)-binding residues include glutamate 782 and glutamine 785. The Cytoplasmic portion of the chain corresponds to 790-796 (GVNYFTD). A helical membrane pass occupies residues 797 to 817 (LWNVMDTLGLFYFIAGIVFRL). Ca(2+) contacts are provided by asparagine 799 and aspartate 802. At 818 to 822 (HSSNK) the chain is on the extracellular side. Residues 823–848 (SSLYSGRVIFCLDYIIFTLRLIHIFT) traverse the membrane as a helical segment. Topologically, residues 849–853 (VSRNL) are cytoplasmic. Residues 854–890 (GPKIIMLQRMLIDVFFFLFLFAVWMVAFGVARQGILR) traverse the membrane as a helical segment. The Extracellular segment spans residues 891–895 (QNEQR). Residues 896-912 (WRWIFRSVIYEPYLAMF) constitute an intramembrane region (pore-forming). The Extracellular segment spans residues 913-953 (GQVPSDVDSTTYDFSHCTFSGNESKPLCVELDEYNLPRFPE). The chain crosses the membrane as a helical span at residues 954–984 (WITIPLVCIYMLSTNILLVNLLVAMFGYTVG). Residues 985–1104 (IVQENNDQVW…LLKEIANKIK (120 aa)) are Cytoplasmic-facing. A coiled-coil region spans residues 1067–1104 (INTKANDNAEEMRHRFRQLDTKLNDLKGLLKEIANKIK).

This sequence belongs to the transient receptor (TC 1.A.4) family. LTrpC subfamily. TRPM8 sub-subfamily. As to quaternary structure, homotetramer. Interacts (via N-terminus and C-terminus domains) with TCAF1; the interaction stimulates TRPM8 channel activity. Interacts (via N-terminus and C-terminus domains) with TCAF2; the interaction inhibits TRPM8 channel activity. Expressed in dorsal root and trigeminal ganglia. Specifically expressed in a subset of sensory neurons, including cold-sensitive neurons in trigeminal neurons.

The protein resides in the cell membrane. It is found in the membrane raft. It catalyses the reaction Ca(2+)(in) = Ca(2+)(out). It carries out the reaction Na(+)(in) = Na(+)(out). The catalysed reaction is K(+)(in) = K(+)(out). Activated by cold temperatures and by both natural and synthetic cooling compounds such as menthol and icilin. Activation of the channel requires the presence of PI(4,5)P2; PI(4,5)P2 is necessary to gate the channel. Activated by intracellular Ca(2+). In terms of biological role, non-selective ion channel permeable to monovalent and divalent cations, including Na(+), K(+), and Ca(2+), with higher permeability for Ca(2+). Activated by multiple factors, such as temperature, voltage, pressure, and changes in osmolality. Activated by cool temperatures (&lt;23-28 degrees Celsius) and by chemical ligands evoking a sensation of coolness, such as menthol and icilin, therefore plays a central role in the detection of environmental cold temperatures. TRPM8 is a voltage-dependent channel; its activation by cold or chemical ligands shifts its voltage thresholds towards physiological membrane potentials, leading to the opening of the channel. In addition to its critical role in temperature sensing, regulates basal tear secretion by sensing evaporation-induced cooling and changes in osmolality. The protein is Transient receptor potential cation channel subfamily M member 8 (Trpm8) of Rattus norvegicus (Rat).